A 103-amino-acid chain; its full sequence is Zinc-containing ferredoxin (103 aa).

Residues 1–36 are N-terminal extension; sequence GIDPNYRTSKPVVGDHSGHKIYGPVESPKVLGVHGT. A Zn(2+)-binding site is contributed by H19. N6-methyllysine is present on K29. A Zn(2+)-binding site is contributed by H34. 4Fe-4S ferredoxin-type domains are found at residues 35 to 65 and 74 to 103; these read GTIV…WYET and KADP…VKPP. Positions 45 and 51 each coordinate [3Fe-4S] cluster. C55 serves as a coordination point for [4Fe-4S] cluster. A Zn(2+)-binding site is contributed by D76. [4Fe-4S] cluster is bound by residues C83, C86, and C89. C93 contacts [3Fe-4S] cluster.

The cofactor is [3Fe-4S] cluster. [4Fe-4S] cluster is required as a cofactor. Zn(2+) serves as cofactor.

Functionally, ferredoxins are iron-sulfur proteins that transfer electrons in a wide variety of metabolic reactions. The protein is Zinc-containing ferredoxin (zfx) of Sulfolobus acidocaldarius (strain ATCC 33909 / DSM 639 / JCM 8929 / NBRC 15157 / NCIMB 11770).